The following is a 376-amino-acid chain: WW domain-binding protein 4 (376 aa).

A Matrin-type zinc finger spans residues 11–42 (KFCDYCKCWIADNRPSVEFHERGKNHKENVAR). The span at 94–111 (PTVSPVISTVQPTPTSNQ) shows a compositional bias: polar residues. Disordered stretches follow at residues 94-127 (PTVSPVISTVQPTPTSNQQKEKKKKKKKKEASKG) and 192-324 (WEKP…ECLS). Residues 114-123 (EKKKKKKKKE) show a composition bias toward basic residues. 2 WW domains span residues 123 to 156 (EASKGGWVEGVTADGHCYYYDLITGASQWEKPEG) and 164 to 197 (TAAKAVWVEGLSEDGYTYYYNTETGESKWEKPED). A compositionally biased stretch (basic and acidic residues) spans 219 to 272 (EDAKSSDSHSDSEGEQKKAGEASTETKKLIIKFKEKNKSTEKRIGPEIQKEKST). Residues Ser-228 and Ser-230 each carry the phosphoserine modification. The interaction with SNRNP200 stretch occupies residues 357 to 375 (KKRRLENGKSRNLRQRGDD).

Component of the spliceosome B complex. Associated with U2 snRNPs. Binds splicing factors SNRPB, SNRPC and SF1. Interacts via the WW domains with the Pro-rich domains of KHDRBS1/SAM68. Interacts via the WW domains with the Pro-rich domains of WBP11. Interacts with SNRNP200.

It localises to the nucleus. It is found in the nucleus speckle. Involved in pre-mRNA splicing as a component of the spliceosome. May play a role in cross-intron bridging of U1 and U2 snRNPs in the mammalian A complex. This Mus musculus (Mouse) protein is WW domain-binding protein 4 (Wbp4).